The primary structure comprises 338 residues: Inositol 2-dehydrogenase 4 (338 aa).

It belongs to the Gfo/Idh/MocA family. In terms of assembly, homotetramer.

It catalyses the reaction myo-inositol + NAD(+) = scyllo-inosose + NADH + H(+). Its function is as follows. Involved in the oxidation of myo-inositol (MI) to 2-keto-myo-inositol (2KMI or 2-inosose). In Saccharopolyspora erythraea (strain ATCC 11635 / DSM 40517 / JCM 4748 / NBRC 13426 / NCIMB 8594 / NRRL 2338), this protein is Inositol 2-dehydrogenase 4.